Here is a 75-residue protein sequence, read N- to C-terminus: uncharacterized protein (75 aa).

The 44-residue stretch at 29–72 folds into the LysM domain; it reads EVYHVESGDTLWTIAKSFEIPVQQLMNLNKLSSDRIYPGQIIKI.

This is an uncharacterized protein from Bacillus subtilis (strain 168).